Reading from the N-terminus, the 245-residue chain is Venom nerve growth factor 1 (245 aa).

The signal sequence occupies residues 1–18; the sequence is MSMLCYTLIIAFLIGIWA. Positions 19–125 are excised as a propeptide; the sequence is APKSEDNVPL…ALNRNIRAKR (107 aa). Over residues 47–66 the composition is skewed to basic and acidic residues; that stretch reads GLKTSRNTDQRHPAPKKAED. The disordered stretch occupies residues 47–69; that stretch reads GLKTSRNTDQRHPAPKKAEDQEL. 3 disulfides stabilise this stretch: C139–C206, C182–C234, and C194–C236. N-linked (GlcNAc...) asparagine glycosylation is found at N148 and N151.

The protein belongs to the NGF-beta family. In terms of assembly, homodimer; non-covalently linked. In terms of tissue distribution, expressed by the venom gland.

The protein localises to the secreted. Functionally, nerve growth factor is important for the development and maintenance of the sympathetic and sensory nervous systems. It stimulates division and differentiation of sympathetic and embryonic sensory neurons as well as basal forebrain cholinergic neurons in the brain. Its relevance in the snake venom is not clear. However, it has been shown to inhibit metalloproteinase-dependent proteolysis of platelet glycoprotein Ib alpha, suggesting a metalloproteinase inhibition to prevent metalloprotease autodigestion and/or protection against prey proteases. Binds a lipid between the two protein chains in the homodimer. The lipid-bound form promotes histamine relase from mouse mast cells, contrary to the lipid-free form. This chain is Venom nerve growth factor 1, found in Tropidechis carinatus (Australian rough-scaled snake).